The following is a 264-amino-acid chain: MSNILTKILARKVEEIAERLLHVSQAELVARCADLPTPRGFAAALQATIAHGDPAVIAEIKKASPSKGVLREDFRPAEIAISYELGGASCLSVLTDVHFFKGHDDYLSQARDACTLPVLRKDFTIDPYQVYEARVLGADCILLIVAALDDAQLVDLSGLALQLGMDVLVEVHDIDELERAIQISAPLIGINNRNLSTFNVSLETTLTMKGLVPRDRLLVSESGILTSADVQRLRAAGVNAFLVGEAFMRAAEPGESLREMFFIT.

It belongs to the TrpC family.

The catalysed reaction is 1-(2-carboxyphenylamino)-1-deoxy-D-ribulose 5-phosphate + H(+) = (1S,2R)-1-C-(indol-3-yl)glycerol 3-phosphate + CO2 + H2O. It functions in the pathway amino-acid biosynthesis; L-tryptophan biosynthesis; L-tryptophan from chorismate: step 4/5. The protein is Indole-3-glycerol phosphate synthase of Xylella fastidiosa (strain M23).